Reading from the N-terminus, the 92-residue chain is MTKLEEHLEGIVNIFHQYSVRKGHFDTLSKGELKQLLTKELANTIKNIKDKAVIDEIFQGLDANQDEQVDFQEFISLVAIALKAAHYHTHKE.

2 consecutive EF-hand domains span residues 13–48 and 49–84; these read NIFH…IKNI and KDKA…ALKA. His-16 contributes to the Cu cation binding site. His-16 lines the Zn(2+) pocket. Ca(2+) is bound by residues Ser-19, Lys-22, and His-24. Asp-26 lines the Cu cation pocket. Asp-26 contributes to the Zn(2+) binding site. Ca(2+) is bound by residues Thr-27 and Glu-32. Residues 38-53 are hinge domain; that stretch reads TKELANTIKNIKDKAV. Residues Asp-62, Asn-64, Asp-66, Gln-68, and Glu-73 each contribute to the Ca(2+) site. The Cu cation site is built by His-86 and His-90. Zn(2+)-binding residues include His-86 and His-90.

It belongs to the S-100 family. Homodimer. Homooligomer (tetramer or hexamer) in the presence of calcium, zinc and copper ions. Interacts with AGER and both calcium and zinc are essential for the interaction. Interacts with CACYBP in a calcium-dependent manner. Predominantly expressed by neutrophils, monocytes and activated macrophages. Expressed by eosinophils and macrophages in asthmatic airways in regions where mast cells accumulate. Found in high concentrations in the serum of patients suffering from various inflammatory disorders, such as rheumatoid arthritis, psoriatic arthritis, Crohn's disease, ulcerative colitis, and Kawasaki disease.

It localises to the secreted. Its subcellular location is the cytoplasm. The protein resides in the cytoskeleton. It is found in the cell membrane. Functionally, S100A12 is a calcium-, zinc- and copper-binding protein which plays a prominent role in the regulation of inflammatory processes and immune response. Its pro-inflammatory activity involves recruitment of leukocytes, promotion of cytokine and chemokine production, and regulation of leukocyte adhesion and migration. Acts as an alarmin or a danger associated molecular pattern (DAMP) molecule and stimulates innate immune cells via binding to receptor for advanced glycation endproducts (AGER). Binding to AGER activates the MAP-kinase and NF-kappa-B signaling pathways leading to production of pro-inflammatory cytokines and up-regulation of cell adhesion molecules ICAM1 and VCAM1. Acts as a monocyte and mast cell chemoattractant. Can stimulate mast cell degranulation and activation which generates chemokines, histamine and cytokines inducing further leukocyte recruitment to the sites of inflammation. Can inhibit the activity of matrix metalloproteinases; MMP2, MMP3 and MMP9 by chelating Zn(2+) from their active sites. Possesses filariacidal and filariastatic activity. Calcitermin possesses antifungal activity against C.albicans and is also active against E.coli and P.aeruginosa but not L.monocytogenes and S.aureus. This Homo sapiens (Human) protein is Protein S100-A12 (S100A12).